We begin with the raw amino-acid sequence, 473 residues long: MRHYYSVDTIRAAEAPLLASLPDGALMRRAAFGLATEIGRELTARTGGVVGRRVCAVVGSGDNGGDALWAATFLRRRGAAADAVLLNPDRTHRKALAAFTKSGGRLVESVSAATDLVIDGVVGISGSGPLRPAAAQVFAAVQAAAIPVVAVDIPSGIDVATGAITGPAVHAALTVTFGGLKPVHALADCGRVVLVDIGLDLAHTDVLGFEATDVAARWPVPGPRDDKYTQGVTGVLAGSSTYPGAAVLCTGAAVAATSGMVRYAGTAHAEVLAHWPEVIASPTPAAAGRVQAWVVGPGLGTDEAGAAALWFALDTDLPVLVDADGLTMLADHPDLVAGRNAPTVLTPHAGEFARLAGAPPGDDRVGACRQLADALGATVLLKGNVTVIADPGGPVYLNPAGQSWAATAGSGDVLSGMIGALLASGLPSGEAAAAAAFVHARASAAAAADPGPGDAPTSASRISGHIRAALAAL.

Residues 1–211 (MRHYYSVDTI…AHTDVLGFEA (211 aa)) form an NAD(P)H-hydrate epimerase region. The YjeF N-terminal domain maps to 10–205 (IRAAEAPLLA…DIGLDLAHTD (196 aa)). Positions 62–66 (DNGGD) are NADPHX 1; for epimerase activity. Asn-63 and Asp-119 together coordinate K(+). The interval 123 to 129 (GISGSGP) is NADPHX 1; for epimerase activity. Position 152 (Asp-152) interacts with (6S)-NADPHX. Residue Ser-155 participates in K(+) binding. Positions 210-473 (EATDVAARWP…GHIRAALAAL (264 aa)) constitute a YjeF C-terminal domain. Residues 211–473 (ATDVAARWPV…GHIRAALAAL (263 aa)) are ADP-dependent (S)-NAD(P)H-hydrate dehydratase. Residue Gly-298 participates in (6S)-NADPHX binding. Positions 348 to 354 (HAGEFAR) are NADPHX 2; for dehydratase activity. ADP is bound by residues 382 to 386 (KGNVT) and 402 to 411 (QSWAATAGSG). Asp-412 contributes to the (6S)-NADPHX binding site.

In the N-terminal section; belongs to the NnrE/AIBP family. The protein in the C-terminal section; belongs to the NnrD/CARKD family. The cofactor is K(+).

It carries out the reaction (6S)-NADHX + ADP = AMP + phosphate + NADH + H(+). The enzyme catalyses (6S)-NADPHX + ADP = AMP + phosphate + NADPH + H(+). The catalysed reaction is (6R)-NADHX = (6S)-NADHX. It catalyses the reaction (6R)-NADPHX = (6S)-NADPHX. Its function is as follows. Bifunctional enzyme that catalyzes the epimerization of the S- and R-forms of NAD(P)HX and the dehydration of the S-form of NAD(P)HX at the expense of ADP, which is converted to AMP. This allows the repair of both epimers of NAD(P)HX, a damaged form of NAD(P)H that is a result of enzymatic or heat-dependent hydration. This is Bifunctional NAD(P)H-hydrate repair enzyme Nnr (nnr) from Mycobacterium tuberculosis (strain CDC 1551 / Oshkosh).